A 294-amino-acid polypeptide reads, in one-letter code: ATP phosphoribosyltransferase (294 aa).

This sequence belongs to the ATP phosphoribosyltransferase family. Long subfamily. Requires Mg(2+) as cofactor.

The protein resides in the cytoplasm. It carries out the reaction 1-(5-phospho-beta-D-ribosyl)-ATP + diphosphate = 5-phospho-alpha-D-ribose 1-diphosphate + ATP. It participates in amino-acid biosynthesis; L-histidine biosynthesis; L-histidine from 5-phospho-alpha-D-ribose 1-diphosphate: step 1/9. Feedback inhibited by histidine. Functionally, catalyzes the condensation of ATP and 5-phosphoribose 1-diphosphate to form N'-(5'-phosphoribosyl)-ATP (PR-ATP). Has a crucial role in the pathway because the rate of histidine biosynthesis seems to be controlled primarily by regulation of HisG enzymatic activity. The protein is ATP phosphoribosyltransferase of Chlorobium phaeobacteroides (strain DSM 266 / SMG 266 / 2430).